A 309-amino-acid polypeptide reads, in one-letter code: D-alanine--D-alanine ligase (309 aa).

Residues 109–304 form the ATP-grasp domain; that stretch reads KMVWAACGLP…FTALCLAILE (196 aa). 135–190 is an ATP binding site; it reads VAELGLPIFVKPVHEGSSMGATKVTAASQLKAAWERAARFDDLVLAEEFIVGAELT. The Mg(2+) site is built by Asp258, Glu271, and Asn273.

This sequence belongs to the D-alanine--D-alanine ligase family. Mg(2+) serves as cofactor. The cofactor is Mn(2+).

The protein localises to the cytoplasm. It catalyses the reaction 2 D-alanine + ATP = D-alanyl-D-alanine + ADP + phosphate + H(+). The protein operates within cell wall biogenesis; peptidoglycan biosynthesis. Its function is as follows. Cell wall formation. In Aromatoleum aromaticum (strain DSM 19018 / LMG 30748 / EbN1) (Azoarcus sp. (strain EbN1)), this protein is D-alanine--D-alanine ligase.